Consider the following 522-residue polypeptide: Sorting nexin-1 (522 aa).

A disordered region spans residues 1–142 (MASGGGGCSA…ELEEEEQEDQ (142 aa)). Phosphoserine occurs at positions 32 and 39. Over residues 35 to 45 (EAGDSDTEGED) the composition is skewed to acidic residues. Phosphothreonine occurs at positions 41 and 48. Over residues 55–65 (KPQSPKKTTSL) the composition is skewed to polar residues. Phosphoserine is present on residues serine 58 and serine 72. Positions 71 to 80 (GSKENGIHEE) are enriched in basic and acidic residues. The segment covering 98 to 107 (LDSTQNNQKT) has biased composition (polar residues). The segment covering 132 to 142 (EELEEEEQEDQ) has biased composition (acidic residues). Residues 143–272 (FDLTVGITDP…EFLEKEELPR (130 aa)) form the PX domain. The a 1,2-diacyl-sn-glycero-3-phospho-(1D-myo-inositol-3-phosphate) site is built by arginine 186, serine 188, and lysine 214. Position 188 is a phosphoserine (serine 188). Residue lysine 237 is modified to N6-acetyllysine. Residue arginine 238 coordinates a 1,2-diacyl-sn-glycero-3-phospho-(1D-myo-inositol-3-phosphate). Serine 280 carries the post-translational modification Phosphoserine. Positions 281 to 298 (GAGLLKMFNKATDAVSKM) are membrane-binding amphipathic helix. A BAR domain is found at 302-522 (MNESDIWFEE…AFLPEARAIS (221 aa)).

The protein belongs to the sorting nexin family. As to quaternary structure, predominantly forms heterodimers with BAR domain-containing sorting nexins SNX5, SNX6 and SNX32; can self-associate to form homodimers. The heterodimers are proposed to self-assemble into helical arrays on the membrane to stabilize and expand local membrane curvature underlying endosomal tubule formation. Thought to be a component of the originally described retromer complex (also called SNX-BAR retromer) which is a pentamer containing the heterotrimeric retromer cargo-selective complex (CSC), also described as vacuolar protein sorting subcomplex (VPS) and a heterodimeric membrane-deforming subcomplex formed between SNX1 or SNX2 and SNX5 or SNX6 (also called SNX-BAR subcomplex); the respective CSC and SNX-BAR subcomplexes associate with low affinity. Interacts with SNX5, SNX6, SNX32, VPS26A, VPS29, VPS35, DRD5, DENND5A, KALRN, RHOG (GDP-bound form). The interaction with SNX2 is reported controversially. Interacts with DNAJC13; prevented by presence of HGS. Interacts with HGS.

It is found in the endosome membrane. The protein localises to the golgi apparatus. The protein resides in the trans-Golgi network membrane. It localises to the early endosome membrane. Its subcellular location is the cell projection. It is found in the lamellipodium. Its function is as follows. Involved in several stages of intracellular trafficking. Interacts with membranes containing phosphatidylinositol 3-phosphate (PtdIns(3P)) or phosphatidylinositol 3,5-bisphosphate (PtdIns(3,5)P2). Acts in part as component of the retromer membrane-deforming SNX-BAR subcomplex. The SNX-BAR retromer mediates retrograde transport of cargo proteins from endosomes to the trans-Golgi network (TGN) and is involved in endosome-to-plasma membrane transport for cargo protein recycling. The SNX-BAR subcomplex functions to deform the donor membrane into a tubular profile called endosome-to-TGN transport carrier (ETC). Can sense membrane curvature and has in vitro vesicle-to-membrane remodeling activity. Involved in retrograde endosome-to-TGN transport of lysosomal enzyme receptors (IGF2R, M6PR and SORT1). Plays a role in targeting ligand-activated EGFR to the lysosomes for degradation after endocytosis from the cell surface and release from the Golgi. Involvement in retromer-independent endocytic trafficking of P2RY1 and lysosomal degradation of protease-activated receptor-1/F2R. Promotes KALRN- and RHOG-dependent but retromer-independent membrane remodeling such as lamellipodium formation; the function is dependent on GEF activity of KALRN. Required for endocytosis of DRD5 upon agonist stimulation but not for basal receptor trafficking. This chain is Sorting nexin-1 (Snx1), found in Rattus norvegicus (Rat).